The primary structure comprises 154 residues: NAD(P)H-quinone oxidoreductase subunit N (154 aa).

Belongs to the complex I NdhN subunit family. In terms of assembly, NDH-1 can be composed of about 15 different subunits; different subcomplexes with different compositions have been identified which probably have different functions.

It is found in the cellular thylakoid membrane. It catalyses the reaction a plastoquinone + NADH + (n+1) H(+)(in) = a plastoquinol + NAD(+) + n H(+)(out). The catalysed reaction is a plastoquinone + NADPH + (n+1) H(+)(in) = a plastoquinol + NADP(+) + n H(+)(out). Its function is as follows. NDH-1 shuttles electrons from an unknown electron donor, via FMN and iron-sulfur (Fe-S) centers, to quinones in the respiratory and/or the photosynthetic chain. The immediate electron acceptor for the enzyme in this species is believed to be plastoquinone. Couples the redox reaction to proton translocation, and thus conserves the redox energy in a proton gradient. Cyanobacterial NDH-1 also plays a role in inorganic carbon-concentration. This chain is NAD(P)H-quinone oxidoreductase subunit N, found in Prochlorococcus marinus (strain NATL2A).